A 335-amino-acid chain; its full sequence is Nucleoid-associated protein YejK (335 aa).

This sequence belongs to the YejK family.

It localises to the cytoplasm. The protein localises to the nucleoid. This chain is Nucleoid-associated protein YejK, found in Shigella dysenteriae serotype 1 (strain Sd197).